Consider the following 1103-residue polypeptide: Isoleucine--tRNA ligase (1103 aa).

The 'HIGH' region motif lies at 53-63 (PFANGLPHYGH). Positions 628–632 (KLSKR) match the 'KMSKS' region motif. Lys631 lines the ATP pocket.

This sequence belongs to the class-I aminoacyl-tRNA synthetase family. IleS type 2 subfamily. In terms of assembly, monomer. Zn(2+) serves as cofactor.

It localises to the cytoplasm. The catalysed reaction is tRNA(Ile) + L-isoleucine + ATP = L-isoleucyl-tRNA(Ile) + AMP + diphosphate. Catalyzes the attachment of isoleucine to tRNA(Ile). As IleRS can inadvertently accommodate and process structurally similar amino acids such as valine, to avoid such errors it has two additional distinct tRNA(Ile)-dependent editing activities. One activity is designated as 'pretransfer' editing and involves the hydrolysis of activated Val-AMP. The other activity is designated 'posttransfer' editing and involves deacylation of mischarged Val-tRNA(Ile). The protein is Isoleucine--tRNA ligase of Rickettsia akari (strain Hartford).